The primary structure comprises 499 residues: Probable inactive receptor-like protein kinase At3g56050 (499 aa).

The signal sequence occupies residues M1–S31. N14 carries N-linked (GlcNAc...) asparagine glycosylation. Over L32 to P146 the chain is Extracellular. The segment at R80–P121 is disordered. The N-linked (GlcNAc...) asparagine glycan is linked to N142. A helical membrane pass occupies residues I147 to F167. The Cytoplasmic segment spans residues F168–A499. The region spanning E208–T474 is the Protein kinase domain.

It localises to the cell membrane. This chain is Probable inactive receptor-like protein kinase At3g56050, found in Arabidopsis thaliana (Mouse-ear cress).